A 709-amino-acid chain; its full sequence is Solute carrier family 15 member 1 (709 aa).

The helical transmembrane segment at 1 to 21 (MGMSKSRGCFGYPLSIFFIVV) threads the bilayer. The Extracellular portion of the chain corresponds to 22–53 (NEFCERFSYYGMRALLVLYFRNFLGWDDNLST). N-linked (GlcNAc...) asparagine glycosylation occurs at Asn-50. Residues 54 to 74 (AIYHTFVALCYLTPILGALIA) form a helical membrane-spanning segment. Over 75–82 (DSWLGKFK) the chain is Cytoplasmic. The helical transmembrane segment at 83-103 (TIVSLSIVYTIGQAVISVSSI) threads the bilayer. Residues 104-118 (NDLTDHDHNGSPDSL) lie on the Extracellular side of the membrane. Residues 119-139 (PVHVALSMVGLALIALGTGGI) traverse the membrane as a helical segment. Topologically, residues 140 to 161 (KPCVSAFGGDQFEEGQEKQRNR) are cytoplasmic. Residues 162–182 (FFSIFYLAINGGSLLSTIITP) form a helical membrane-spanning segment. At 183 to 198 (ILRVQQCGIHSQQACY) the chain is on the extracellular side. Residues 199-219 (PLAFGVPAALMAVALIVFVLG) form a helical membrane-spanning segment. The Cytoplasmic portion of the chain corresponds to 220 to 276 (SGMYKKFQPQGNIMGKVAKCIGFAIKNRFRHRSKAYPKREHWLDWAKEKYDERLISQ). The chain crosses the membrane as a helical span at residues 277-297 (IKMVTKVMFLYIPLPMFWALF). Topologically, residues 298-327 (DQQGSRWTLQATTMNGKIGAIEIQPDQMQT) are extracellular. Residues 328–348 (VNAILIVIMVPIVDAVVYPLI) form a helical membrane-spanning segment. Topologically, residues 349–361 (AKCGFNFTSLKKM) are cytoplasmic. A helical membrane pass occupies residues 362-382 (TVGMFLASMAFVVAAIVQVEI). Topologically, residues 383-585 (DKTLPVFPGG…PPNTVNMALQ (203 aa)) are extracellular. The tract at residues 383–585 (DKTLPVFPGG…PPNTVNMALQ (203 aa)) is extracellular domain (ECD). N-linked (GlcNAc...) asparagine glycosylation is found at Asn-406, Asn-439, Asn-515, and Asn-532. A helical transmembrane segment spans residues 586 to 606 (IPQYFLLTCGEVVFSVTGLEF). Residues 607–620 (SYSQAPSNMKSVLQ) are Cytoplasmic-facing. The helical transmembrane segment at 621 to 641 (AGWLLTVAVGNIIVLIVAGAG) threads the bilayer. Residues 642–646 (HFPKQ) lie on the Extracellular side of the membrane. Residues 647–667 (WAEYILFASLLLVVCVIFAIM) traverse the membrane as a helical segment. Residues 668 to 709 (ARFYTYINPAEIEAQFDEDEKKKGIGKENPYSSLEPVSQTNM) are Cytoplasmic-facing. A disordered region spans residues 690-709 (KGIGKENPYSSLEPVSQTNM). Over residues 697–709 (PYSSLEPVSQTNM) the composition is skewed to polar residues.

It belongs to the major facilitator superfamily. Proton-dependent oligopeptide transporter (POT/PTR) (TC 2.A.17) family. Interacts (via extracellular domain region) with trypsin.

The protein localises to the apical cell membrane. The enzyme catalyses a dipeptide(out) + H(+)(out) = a dipeptide(in) + H(+)(in). The catalysed reaction is an L-amino acid tripeptide(out) + H(+)(out) = an L-amino acid tripeptide(in) + H(+)(in). It catalyses the reaction L-alanyl-L-lysine(out) + H(+)(out) = L-alanyl-L-lysine(in) + H(+)(in). It carries out the reaction L-alanyl-L-proline(out) + H(+)(out) = L-alanyl-L-proline(in) + H(+)(in). The enzyme catalyses L-alanyl-L-valine(out) + H(+)(out) = L-alanyl-L-valine(in) + H(+)(in). The catalysed reaction is carnosine(out) + H(+)(out) = carnosine(in) + H(+)(in). It catalyses the reaction glycyl-L-glutamine(out) + H(+)(out) = glycyl-L-glutamine(in) + H(+)(in). It carries out the reaction glycyl-L-leucine(out) + H(+)(out) = glycyl-L-leucine(in) + H(+)(in). The enzyme catalyses glycyl-L-proline(out) + H(+)(out) = glycyl-L-proline(in) + H(+)(in). The catalysed reaction is glycyl-sarcosine(out) + H(+)(out) = glycyl-sarcosine(in) + H(+)(in). It catalyses the reaction L-leucyl-L-leucine(out) + H(+)(out) = L-leucyl-L-leucine(in) + H(+)(in). It carries out the reaction L-leucyl-L-proline(out) + H(+)(out) = L-leucyl-L-proline(in) + H(+)(in). The enzyme catalyses L-phenylalanyl-L-leucine(out) + H(+)(out) = L-phenylalanyl-L-leucine(in) + H(+)(in). The catalysed reaction is L-phenylalanyl-L-phenylalanine(out) + H(+)(out) = L-phenylalanyl-L-phenylalanine(in) + H(+)(in). It catalyses the reaction L-lysyl-glycine(out) + H(+)(out) = L-lysyl-glycine(in) + H(+)(in). It carries out the reaction L-tyrosylglycine(out) + H(+)(out) = L-tyrosylglycine(in) + H(+)(in). The enzyme catalyses L-alanyl-L-aspartate(out) + 2 H(+)(out) = L-alanyl-L-aspartate(in) + 2 H(+)(in). The catalysed reaction is L-aspartyl-glycine(out) + 2 H(+)(out) = L-aspartyl-glycine(in) + 2 H(+)(in). It catalyses the reaction glycyl-L-aspartate(out) + 2 H(+)(out) = glycyl-L-aspartate(in) + 2 H(+)(in). It carries out the reaction glycyl-L-glutamate(out) + 2 H(+)(out) = glycyl-L-glutamate(in) + 2 H(+)(in). The enzyme catalyses L-alanyl-L-leucyl-L-alanine(out) + H(+)(out) = L-alanyl-L-leucyl-L-alanine(in) + H(+)(in). The catalysed reaction is L-alanyl-L-prolylglycine(out) + H(+)(out) = L-alanyl-L-prolylglycine(in) + H(+)(in). It catalyses the reaction glycylglycyl-L-isoleucine(out) + H(+)(out) = glycylglycyl-L-isoleucine(in) + H(+)(in). It carries out the reaction glycylglycyl-L-proline(out) + H(+)(out) = glycylglycyl-L-proline(in) + H(+)(in). The enzyme catalyses L-methionyl-L-phenylalanyl-L-methionine(out) + H(+)(out) = L-methionyl-L-phenylalanyl-L-methionine(in) + H(+)(in). The catalysed reaction is N-acetyl-D-muramoyl-L-alanyl-D-isoglutamine(out) + 2 H(+)(out) = N-acetyl-D-muramoyl-L-alanyl-D-isoglutamine(in) + 2 H(+)(in). It catalyses the reaction N(alpha)-formyl-L-methionyl-L-leucyl-L-phenylalanine(out) + 2 H(+)(out) = N(alpha)-formyl-L-methionyl-L-leucyl-L-phenylalanine(in) + 2 H(+)(in). Its function is as follows. Electrogenic proton-coupled amino-acid transporter that transports oligopeptides of 2 to 4 amino acids with a preference for dipeptides. Transports neutral and monovalently charged peptides with a proton to peptide stoichiometry of 1:1 or 2:1. Primarily responsible for the absorption of dietary di- and tripeptides from the small intestinal lumen. Mediates transepithelial transport of muramyl and N-formylated bacterial dipeptides contributing to recognition of pathogenic bacteria by the mucosal immune system. The protein is Solute carrier family 15 member 1 of Mus musculus (Mouse).